Here is a 67-residue protein sequence, read N- to C-terminus: Small ribosomal subunit protein eS17 (67 aa).

Belongs to the eukaryotic ribosomal protein eS17 family.

The protein is Small ribosomal subunit protein eS17 of Korarchaeum cryptofilum (strain OPF8).